The following is a 305-amino-acid chain: Tyrosine recombinase XerC (305 aa).

One can recognise a Core-binding (CB) domain in the interval 4-95 (TSIQELINKW…AVKNFYKFLE (92 aa)). The region spanning 116-298 (LLPKSLSEDD…SIKHLVSVYT (183 aa)) is the Tyr recombinase domain. Residues Arg159, Lys182, His250, Arg253, and His276 contribute to the active site. Tyr285 serves as the catalytic O-(3'-phospho-DNA)-tyrosine intermediate.

This sequence belongs to the 'phage' integrase family. XerC subfamily. In terms of assembly, forms a cyclic heterotetrameric complex composed of two molecules of XerC and two molecules of XerD.

It localises to the cytoplasm. Site-specific tyrosine recombinase, which acts by catalyzing the cutting and rejoining of the recombining DNA molecules. The XerC-XerD complex is essential to convert dimers of the bacterial chromosome into monomers to permit their segregation at cell division. It also contributes to the segregational stability of plasmids. The protein is Tyrosine recombinase XerC of Rickettsia canadensis (strain McKiel).